Here is a 337-residue protein sequence, read N- to C-terminus: ATP-dependent 6-phosphofructokinase (337 aa).

Gly11 is an ATP binding site. Residue 21 to 25 participates in ADP binding; sequence RAVVR. Residues 72–73 and 102–105 each bind ATP; these read RY and GDGS. Asp103 lines the Mg(2+) pocket. 125-127 is a substrate binding site; sequence TID. Residue Asp127 is the Proton acceptor of the active site. Arg154 contributes to the ADP binding site. Substrate-binding positions include Arg162 and 169 to 171; that span reads MGR. Residues 185–187, Lys212, and 214–216 each bind ADP; these read GAD and KNH. Substrate is bound by residues Glu223, Arg245, and 251-254; that span reads HILR.

This sequence belongs to the phosphofructokinase type A (PFKA) family. ATP-dependent PFK group I subfamily. Prokaryotic clade 'B1' sub-subfamily. Homotetramer. Mg(2+) is required as a cofactor.

The protein localises to the cytoplasm. The catalysed reaction is beta-D-fructose 6-phosphate + ATP = beta-D-fructose 1,6-bisphosphate + ADP + H(+). It functions in the pathway carbohydrate degradation; glycolysis; D-glyceraldehyde 3-phosphate and glycerone phosphate from D-glucose: step 3/4. Allosterically activated by ADP and other diphosphonucleosides, and allosterically inhibited by phosphoenolpyruvate. Catalyzes the phosphorylation of D-fructose 6-phosphate to fructose 1,6-bisphosphate by ATP, the first committing step of glycolysis. The polypeptide is ATP-dependent 6-phosphofructokinase (Streptococcus pyogenes serotype M3 (strain SSI-1)).